The following is a 470-amino-acid chain: Beta-Ala-Xaa dipeptidase (470 aa).

Residue His87 coordinates Zn(2+). The active site involves Asp89. Asp119 contacts Zn(2+). The active-site Proton acceptor is Glu153. Positions 154 and 177 each coordinate Zn(2+). Arg350 contributes to the substrate binding site. Residue His439 coordinates Zn(2+).

This sequence belongs to the peptidase M20A family. It depends on Zn(2+) as a cofactor.

It localises to the cytoplasm. Fully inhibited by 1,10-phenanthroline or EDTA. Is a relatively unspecific dipeptidase cleaving a variety of dipeptides, notably those with an N-terminal beta-Ala or D-Ala residue, e.g. carnosine (beta-Ala-His). To a lesser extent, also shows aminopeptidase activity, since it is able to catalyze the removal of the N-terminal amino acid from a few distinct tripeptides. The sequence is that of Beta-Ala-Xaa dipeptidase (pepV) from Lactobacillus delbrueckii subsp. lactis.